The sequence spans 308 residues: Ferrochelatase (308 aa).

H167 and E239 together coordinate Fe cation.

This sequence belongs to the ferrochelatase family.

The protein localises to the cytoplasm. The enzyme catalyses heme b + 2 H(+) = protoporphyrin IX + Fe(2+). Its pathway is porphyrin-containing compound metabolism; protoheme biosynthesis; protoheme from protoporphyrin-IX: step 1/1. Functionally, catalyzes the ferrous insertion into protoporphyrin IX. In Thermoplasma acidophilum (strain ATCC 25905 / DSM 1728 / JCM 9062 / NBRC 15155 / AMRC-C165), this protein is Ferrochelatase.